The following is a 200-amino-acid chain: NAD(P)H dehydrogenase (quinone) (200 aa).

Positions 7 to 199 (LAIVFYSSTG…RQVELTAKLL (193 aa)) constitute a Flavodoxin-like domain. Residues 13–18 (SSTGTG), 86–88 (TRF), 121–127 (SAQNVNG), and H142 each bind FMN.

It belongs to the WrbA family. Homotetramer. Requires FMN as cofactor.

The enzyme catalyses a quinone + NADH + H(+) = a quinol + NAD(+). It catalyses the reaction a quinone + NADPH + H(+) = a quinol + NADP(+). The polypeptide is NAD(P)H dehydrogenase (quinone) (Deinococcus radiodurans (strain ATCC 13939 / DSM 20539 / JCM 16871 / CCUG 27074 / LMG 4051 / NBRC 15346 / NCIMB 9279 / VKM B-1422 / R1)).